The following is a 694-amino-acid chain: Polyribonucleotide nucleotidyltransferase (694 aa).

The Mg(2+) site is built by D485 and D491. A KH domain is found at 552–611; the sequence is PRIETMQIKPNKIATVIGPGGKQIRQIIEEAGVQIDINDSGLVSISASSPQAIEKAKSII. The S1 motif domain occupies 621–689; the sequence is GKIYEGRVTS…EKGQYKLSHK (69 aa).

The protein belongs to the polyribonucleotide nucleotidyltransferase family. Mg(2+) serves as cofactor.

The protein resides in the cytoplasm. The enzyme catalyses RNA(n+1) + phosphate = RNA(n) + a ribonucleoside 5'-diphosphate. Its function is as follows. Involved in mRNA degradation. Catalyzes the phosphorolysis of single-stranded polyribonucleotides processively in the 3'- to 5'-direction. The protein is Polyribonucleotide nucleotidyltransferase of Chlamydia felis (strain Fe/C-56) (Chlamydophila felis).